The chain runs to 119 residues: Ribonuclease P protein component (119 aa).

Belongs to the RnpA family. As to quaternary structure, consists of a catalytic RNA component (M1 or rnpB) and a protein subunit.

The catalysed reaction is Endonucleolytic cleavage of RNA, removing 5'-extranucleotides from tRNA precursor.. RNaseP catalyzes the removal of the 5'-leader sequence from pre-tRNA to produce the mature 5'-terminus. It can also cleave other RNA substrates such as 4.5S RNA. The protein component plays an auxiliary but essential role in vivo by binding to the 5'-leader sequence and broadening the substrate specificity of the ribozyme. The protein is Ribonuclease P protein component of Nitrosomonas europaea (strain ATCC 19718 / CIP 103999 / KCTC 2705 / NBRC 14298).